Here is a 381-residue protein sequence, read N- to C-terminus: Queuine tRNA-ribosyltransferase (381 aa).

Asp96 (proton acceptor) is an active-site residue. Substrate contacts are provided by residues 96-100, Asp150, Gln193, and Gly220; that span reads DSGGF. The RNA binding stretch occupies residues 251 to 257; that stretch reads GVGSPDA. The active-site Nucleophile is the Asp270. The interval 275-279 is RNA binding; important for wobble base 34 recognition; that stretch reads TRIAR. The Zn(2+) site is built by Cys308, Cys310, Cys313, and His339.

The protein belongs to the queuine tRNA-ribosyltransferase family. As to quaternary structure, homodimer. Within each dimer, one monomer is responsible for RNA recognition and catalysis, while the other monomer binds to the replacement base PreQ1. Requires Zn(2+) as cofactor.

The enzyme catalyses 7-aminomethyl-7-carbaguanine + guanosine(34) in tRNA = 7-aminomethyl-7-carbaguanosine(34) in tRNA + guanine. The protein operates within tRNA modification; tRNA-queuosine biosynthesis. Functionally, catalyzes the base-exchange of a guanine (G) residue with the queuine precursor 7-aminomethyl-7-deazaguanine (PreQ1) at position 34 (anticodon wobble position) in tRNAs with GU(N) anticodons (tRNA-Asp, -Asn, -His and -Tyr). Catalysis occurs through a double-displacement mechanism. The nucleophile active site attacks the C1' of nucleotide 34 to detach the guanine base from the RNA, forming a covalent enzyme-RNA intermediate. The proton acceptor active site deprotonates the incoming PreQ1, allowing a nucleophilic attack on the C1' of the ribose to form the product. After dissociation, two additional enzymatic reactions on the tRNA convert PreQ1 to queuine (Q), resulting in the hypermodified nucleoside queuosine (7-(((4,5-cis-dihydroxy-2-cyclopenten-1-yl)amino)methyl)-7-deazaguanosine). The polypeptide is Queuine tRNA-ribosyltransferase (Bacillus velezensis (strain DSM 23117 / BGSC 10A6 / LMG 26770 / FZB42) (Bacillus amyloliquefaciens subsp. plantarum)).